The sequence spans 402 residues: Argininosuccinate synthase (402 aa).

Position 9-17 (9-17 (AYSGGLDTS)) interacts with ATP. Residue Tyr86 participates in L-citrulline binding. Gly116 lines the ATP pocket. L-aspartate is bound by residues Thr118, Asn122, and Asp123. Asn122 lines the L-citrulline pocket. L-citrulline contacts are provided by Arg126, Ser174, Ser183, Glu259, and Tyr271.

The protein belongs to the argininosuccinate synthase family. Type 1 subfamily. In terms of assembly, homotetramer.

It is found in the cytoplasm. It carries out the reaction L-citrulline + L-aspartate + ATP = 2-(N(omega)-L-arginino)succinate + AMP + diphosphate + H(+). It functions in the pathway amino-acid biosynthesis; L-arginine biosynthesis; L-arginine from L-ornithine and carbamoyl phosphate: step 2/3. The polypeptide is Argininosuccinate synthase (Geobacillus sp. (strain WCH70)).